A 343-amino-acid chain; its full sequence is Ribosomal RNA small subunit methyltransferase C (343 aa).

The protein belongs to the methyltransferase superfamily. RsmC family. In terms of assembly, monomer.

Its subcellular location is the cytoplasm. It catalyses the reaction guanosine(1207) in 16S rRNA + S-adenosyl-L-methionine = N(2)-methylguanosine(1207) in 16S rRNA + S-adenosyl-L-homocysteine + H(+). Its function is as follows. Specifically methylates the guanine in position 1207 of 16S rRNA in the 30S particle. The protein is Ribosomal RNA small subunit methyltransferase C of Escherichia coli O157:H7.